Consider the following 243-residue polypeptide: MQGRAGAGEAAGAGSEADAPVSLLPLFAWLTPSFPVGAYAYSHTLEWAVEAGDIRDEESLGTFLGDLLALGFGRSDAILAAHAHRAAAVGDKTALAEVNALAVALAPSAELRLETCQQGRSFLDAVRAAWPAPGLDAAAAALVGEVAYPVAVGLAAGVHGLPLAPTLEAFLLATVQNLVSAAVRLAPIGQTAGTRVVARLAPGVRALALEIPTLTLDDLGSATFRADLGSFRHETQYTRLFRS.

The protein belongs to the UreF family. UreD, UreF and UreG form a complex that acts as a GTP-hydrolysis-dependent molecular chaperone, activating the urease apoprotein by helping to assemble the nickel containing metallocenter of UreC. The UreE protein probably delivers the nickel.

It is found in the cytoplasm. Its function is as follows. Required for maturation of urease via the functional incorporation of the urease nickel metallocenter. This is Urease accessory protein UreF from Xanthobacter autotrophicus (strain ATCC BAA-1158 / Py2).